Here is a 115-residue protein sequence, read N- to C-terminus: Large ribosomal subunit protein uL22 (115 aa).

The protein belongs to the universal ribosomal protein uL22 family. In terms of assembly, part of the 50S ribosomal subunit.

In terms of biological role, this protein binds specifically to 23S rRNA; its binding is stimulated by other ribosomal proteins, e.g. L4, L17, and L20. It is important during the early stages of 50S assembly. It makes multiple contacts with different domains of the 23S rRNA in the assembled 50S subunit and ribosome. The globular domain of the protein is located near the polypeptide exit tunnel on the outside of the subunit, while an extended beta-hairpin is found that lines the wall of the exit tunnel in the center of the 70S ribosome. This chain is Large ribosomal subunit protein uL22, found in Streptomyces griseus subsp. griseus (strain JCM 4626 / CBS 651.72 / NBRC 13350 / KCC S-0626 / ISP 5235).